The following is a 469-amino-acid chain: Probable ribonuclease FAU-1 (469 aa).

It belongs to the FAU-1 family.

Its function is as follows. Probable RNase involved in rRNA stability through maturation and/or degradation of precursor rRNAs. Binds to RNA in loop regions with AU-rich sequences. This chain is Probable ribonuclease FAU-1, found in Ignicoccus hospitalis (strain KIN4/I / DSM 18386 / JCM 14125).